The primary structure comprises 156 residues: Small ribosomal subunit protein uS7 (156 aa).

This sequence belongs to the universal ribosomal protein uS7 family. In terms of assembly, part of the 30S ribosomal subunit. Contacts proteins S9 and S11.

Its function is as follows. One of the primary rRNA binding proteins, it binds directly to 16S rRNA where it nucleates assembly of the head domain of the 30S subunit. Is located at the subunit interface close to the decoding center, probably blocks exit of the E-site tRNA. This is Small ribosomal subunit protein uS7 from Bradyrhizobium diazoefficiens (strain JCM 10833 / BCRC 13528 / IAM 13628 / NBRC 14792 / USDA 110).